A 283-amino-acid chain; its full sequence is Nucleotide-binding protein Sama_3091 (283 aa).

8–15 (GRSGSGKS) contacts ATP. GTP is bound at residue 56 to 59 (DIRN).

Belongs to the RapZ-like family.

Its function is as follows. Displays ATPase and GTPase activities. This Shewanella amazonensis (strain ATCC BAA-1098 / SB2B) protein is Nucleotide-binding protein Sama_3091.